Reading from the N-terminus, the 185-residue chain is Ribosome-recycling factor (185 aa).

Belongs to the RRF family.

It is found in the cytoplasm. Responsible for the release of ribosomes from messenger RNA at the termination of protein biosynthesis. May increase the efficiency of translation by recycling ribosomes from one round of translation to another. The chain is Ribosome-recycling factor from Corynebacterium urealyticum (strain ATCC 43042 / DSM 7109).